A 525-amino-acid polypeptide reads, in one-letter code: Chromosomal replication initiator protein DnaA (525 aa).

The interval 1-71 is domain I, interacts with DnaA modulators; sequence MNDFWQHCSA…ADLAREFWNT (71 aa). The interval 71-188 is domain II; sequence TPIEVQFVLD…AEADSMYERS (118 aa). The segment at 160 to 181 is disordered; the sequence is AAAGRRTWRPGPGAAPANGAEA. Over residues 169-181 the composition is skewed to low complexity; sequence PGPGAAPANGAEA. The domain III, AAA+ region stretch occupies residues 189-405; that stretch reads KLNPVLTFDN…GALRKILAYS (217 aa). ATP is bound by residues G233, G235, K236, and T237. The domain IV, binds dsDNA stretch occupies residues 406–525; it reads KFHGREISIE…LHVLEQTLKG (120 aa).

The protein belongs to the DnaA family. In terms of assembly, oligomerizes as a right-handed, spiral filament on DNA at oriC.

It localises to the cytoplasm. Its function is as follows. Plays an essential role in the initiation and regulation of chromosomal replication. ATP-DnaA binds to the origin of replication (oriC) to initiate formation of the DNA replication initiation complex once per cell cycle. Binds the DnaA box (a 9 base pair repeat at the origin) and separates the double-stranded (ds)DNA. Forms a right-handed helical filament on oriC DNA; dsDNA binds to the exterior of the filament while single-stranded (ss)DNA is stabiized in the filament's interior. The ATP-DnaA-oriC complex binds and stabilizes one strand of the AT-rich DNA unwinding element (DUE), permitting loading of DNA polymerase. After initiation quickly degrades to an ADP-DnaA complex that is not apt for DNA replication. Binds acidic phospholipids. The chain is Chromosomal replication initiator protein DnaA from Burkholderia vietnamiensis (strain G4 / LMG 22486) (Burkholderia cepacia (strain R1808)).